Reading from the N-terminus, the 437-residue chain is Glucose-1-phosphate adenylyltransferase (437 aa).

Residues Tyr-113, Gly-179, 194-195 (EK), and Ser-212 contribute to the alpha-D-glucose 1-phosphate site.

This sequence belongs to the bacterial/plant glucose-1-phosphate adenylyltransferase family. Homotetramer.

It catalyses the reaction alpha-D-glucose 1-phosphate + ATP + H(+) = ADP-alpha-D-glucose + diphosphate. It functions in the pathway glycan biosynthesis; glycogen biosynthesis. Functionally, involved in the biosynthesis of ADP-glucose, a building block required for the elongation reactions to produce glycogen. Catalyzes the reaction between ATP and alpha-D-glucose 1-phosphate (G1P) to produce pyrophosphate and ADP-Glc. The sequence is that of Glucose-1-phosphate adenylyltransferase from Haemophilus influenzae (strain 86-028NP).